The following is a 141-amino-acid chain: Nucleoside triphosphatase NudI (141 aa).

One can recognise a Nudix hydrolase domain in the interval 1–141; sequence MRQRTIVCPL…RKTLRLKGLL (141 aa). The Nudix box motif lies at 38 to 59; it reads GGVEPGERIEEALRREIREELG.

This sequence belongs to the Nudix hydrolase family. NudI subfamily. In terms of assembly, monomer. Mg(2+) is required as a cofactor.

The enzyme catalyses a ribonucleoside 5'-triphosphate + H2O = a ribonucleoside 5'-phosphate + diphosphate + H(+). The catalysed reaction is a 2'-deoxyribonucleoside 5'-triphosphate + H2O = a 2'-deoxyribonucleoside 5'-phosphate + diphosphate + H(+). It carries out the reaction dUTP + H2O = dUMP + diphosphate + H(+). It catalyses the reaction dTTP + H2O = dTMP + diphosphate + H(+). The enzyme catalyses dCTP + H2O = dCMP + diphosphate + H(+). In terms of biological role, catalyzes the hydrolysis of nucleoside triphosphates, with a preference for pyrimidine deoxynucleoside triphosphates (dUTP, dTTP and dCTP). The sequence is that of Nucleoside triphosphatase NudI from Escherichia coli O9:H4 (strain HS).